Consider the following 446-residue polypeptide: Tubulin beta chain (446 aa).

8 residues coordinate GTP: Gln-11, Glu-69, Ser-138, Gly-142, Thr-143, Gly-144, Asn-204, and Asn-226. Glu-69 serves as a coordination point for Mg(2+). Residues 422-446 (YQQYQDAGIDEEEEEYEEELPEGEE) are disordered. The span at 429 to 446 (GIDEEEEEYEEELPEGEE) shows a compositional bias: acidic residues.

It belongs to the tubulin family. Dimer of alpha and beta chains. A typical microtubule is a hollow water-filled tube with an outer diameter of 25 nm and an inner diameter of 15 nM. Alpha-beta heterodimers associate head-to-tail to form protofilaments running lengthwise along the microtubule wall with the beta-tubulin subunit facing the microtubule plus end conferring a structural polarity. Microtubules usually have 13 protofilaments but different protofilament numbers can be found in some organisms and specialized cells. It depends on Mg(2+) as a cofactor.

The protein localises to the cytoplasm. The protein resides in the cytoskeleton. In terms of biological role, tubulin is the major constituent of microtubules, a cylinder consisting of laterally associated linear protofilaments composed of alpha- and beta-tubulin heterodimers. Microtubules grow by the addition of GTP-tubulin dimers to the microtubule end, where a stabilizing cap forms. Below the cap, tubulin dimers are in GDP-bound state, owing to GTPase activity of alpha-tubulin. This Gibberella zeae (strain ATCC MYA-4620 / CBS 123657 / FGSC 9075 / NRRL 31084 / PH-1) (Wheat head blight fungus) protein is Tubulin beta chain (TUB2).